The chain runs to 248 residues: Malonyl-[acyl-carrier protein] O-methyltransferase 2 (248 aa).

The protein belongs to the methyltransferase superfamily.

The enzyme catalyses malonyl-[ACP] + S-adenosyl-L-methionine = malonyl-[ACP] methyl ester + S-adenosyl-L-homocysteine. It participates in cofactor biosynthesis; biotin biosynthesis. Converts the free carboxyl group of a malonyl-thioester to its methyl ester by transfer of a methyl group from S-adenosyl-L-methionine (SAM). It allows to synthesize pimeloyl-ACP via the fatty acid synthetic pathway. This chain is Malonyl-[acyl-carrier protein] O-methyltransferase 2, found in Coxiella burnetii (strain RSA 493 / Nine Mile phase I).